The primary structure comprises 480 residues: F-box only protein 3 (480 aa).

Residues Leu-10–His-56 form the F-box domain. Residues Val-278–Val-408 form the ApaG domain. The span at Glu-419 to Gly-459 shows a compositional bias: acidic residues. Residues Glu-419–Arg-464 form a disordered region.

Part of a SCF (SKP1-cullin-F-box) protein ligase complex SCF(FBXO3) consisting of FBXO3, SKP1, CUL1 and RBX1. Interacts with PML, interaction is direct and takes place either alone or within the SCF complex.

It is found in the nucleus. It participates in protein modification; protein ubiquitination. In terms of biological role, substrate recognition component of the SCF (SKP1-CUL1-F-box protein)-type E3 ubiquitin ligase complex, SCF(FBXO3), which mediates the ubiquitination and subsequent proteasomal degradation of target proteins. Mediates the ubiquitination of HIPK2 and probably that of EP300, leading to rapid degradation by the proteasome. In the presence of PML, HIPK2 ubiquitination still occurs, but degradation is prevented. PML, HIPK2 and FBXO3 may act synergically to activate p53/TP53-dependent transactivation. The SCF(FBXO3) also acts as a regulator of inflammation by mediating ubiquitination and degradation of FBXL2 in response to lipopolysaccharide (LPS). The SCF(FBXO3) complex specifically recognizes FBXL2 phosphorylated at 'Thr-404' and promotes its ubiquitination. This chain is F-box only protein 3 (Fbxo3), found in Rattus norvegicus (Rat).